Consider the following 301-residue polypeptide: Golgi to ER traffic protein 2 (301 aa).

At Met1–Leu167 the chain is on the cytoplasmic side. Positions Ser42 to Val55 are enriched in low complexity. Residues Ser42 to Pro93 form a disordered region. Over residues Leu56 to Asp67 the composition is skewed to basic and acidic residues. A helical membrane pass occupies residues Trp168 to Tyr188. Residues Thr189–Asp214 are Lumenal-facing. The helical transmembrane segment at Phe215–Phe234 threads the bilayer. The Cytoplasmic segment spans residues His235–Glu278. A helical transmembrane segment spans residues Leu279 to Phe299. Topologically, residues Ala300 to Asn301 are lumenal.

Belongs to the GET2 family. Component of the Golgi to ER traffic (GET) complex, which is composed of GET1, GET2 and GET3. Within the complex, GET1 and GET2 form a heterotetramer which is stabilized by phosphatidylinositol binding and which binds to the GET3 homodimer.

The protein localises to the endoplasmic reticulum membrane. Its subcellular location is the golgi apparatus membrane. In terms of biological role, required for the post-translational delivery of tail-anchored (TA) proteins to the endoplasmic reticulum. Together with GET1, acts as a membrane receptor for soluble GET3, which recognizes and selectively binds the transmembrane domain of TA proteins in the cytosol. The GET complex cooperates with the HDEL receptor ERD2 to mediate the ATP-dependent retrieval of resident ER proteins that contain a C-terminal H-D-E-L retention signal from the Golgi to the ER. This Candida dubliniensis (strain CD36 / ATCC MYA-646 / CBS 7987 / NCPF 3949 / NRRL Y-17841) (Yeast) protein is Golgi to ER traffic protein 2.